Reading from the N-terminus, the 195-residue chain is Imidazole glycerol phosphate synthase subunit HisH (195 aa).

A Glutamine amidotransferase type-1 domain is found at 1-195 (MIAVVDLGIG…LRLLENFRRL (195 aa)). Residue Cys-72 is the Nucleophile of the active site. Active-site residues include His-177 and Glu-179.

In terms of assembly, heterodimer of HisH and HisF.

Its subcellular location is the cytoplasm. It catalyses the reaction 5-[(5-phospho-1-deoxy-D-ribulos-1-ylimino)methylamino]-1-(5-phospho-beta-D-ribosyl)imidazole-4-carboxamide + L-glutamine = D-erythro-1-(imidazol-4-yl)glycerol 3-phosphate + 5-amino-1-(5-phospho-beta-D-ribosyl)imidazole-4-carboxamide + L-glutamate + H(+). It carries out the reaction L-glutamine + H2O = L-glutamate + NH4(+). The protein operates within amino-acid biosynthesis; L-histidine biosynthesis; L-histidine from 5-phospho-alpha-D-ribose 1-diphosphate: step 5/9. Its function is as follows. IGPS catalyzes the conversion of PRFAR and glutamine to IGP, AICAR and glutamate. The HisH subunit catalyzes the hydrolysis of glutamine to glutamate and ammonia as part of the synthesis of IGP and AICAR. The resulting ammonia molecule is channeled to the active site of HisF. The sequence is that of Imidazole glycerol phosphate synthase subunit HisH from Thermococcus kodakarensis (strain ATCC BAA-918 / JCM 12380 / KOD1) (Pyrococcus kodakaraensis (strain KOD1)).